A 349-amino-acid chain; its full sequence is Anthranilate phosphoribosyltransferase (349 aa).

5-phospho-alpha-D-ribose 1-diphosphate contacts are provided by residues G94, 97 to 98 (GD), T102, 104 to 107 (NIST), 122 to 130 (KHGNRSVSS), and S134. Position 94 (G94) interacts with anthranilate. S106 contributes to the Mg(2+) binding site. N125 is an anthranilate binding site. R180 contacts anthranilate. Mg(2+) is bound by residues D239 and E240.

This sequence belongs to the anthranilate phosphoribosyltransferase family. Homodimer. The cofactor is Mg(2+).

It carries out the reaction N-(5-phospho-beta-D-ribosyl)anthranilate + diphosphate = 5-phospho-alpha-D-ribose 1-diphosphate + anthranilate. It participates in amino-acid biosynthesis; L-tryptophan biosynthesis; L-tryptophan from chorismate: step 2/5. Functionally, catalyzes the transfer of the phosphoribosyl group of 5-phosphorylribose-1-pyrophosphate (PRPP) to anthranilate to yield N-(5'-phosphoribosyl)-anthranilate (PRA). The protein is Anthranilate phosphoribosyltransferase of Trichlorobacter lovleyi (strain ATCC BAA-1151 / DSM 17278 / SZ) (Geobacter lovleyi).